Reading from the N-terminus, the 1273-residue chain is Kinesin-like protein KIN-7O (1273 aa).

One can recognise a Kinesin motor domain in the interval R3–V327. G79–T86 is a binding site for ATP. A coiled-coil region spans residues V333–A408. The tract at residues S452–T474 is disordered. Positions E453 to S467 are enriched in polar residues. Coiled coils occupy residues E602–V674 and V751–E1023.

Belongs to the TRAFAC class myosin-kinesin ATPase superfamily. Kinesin family. KIN-7 subfamily.

The chain is Kinesin-like protein KIN-7O from Arabidopsis thaliana (Mouse-ear cress).